The primary structure comprises 359 residues: Methyltransferase fsa4 (359 aa).

S-adenosyl-L-methionine-binding positions include Gly198 to Gly199, Asp224, Ser248 to Phe249, Arg264, and Arg265.

The protein belongs to the class I-like SAM-binding methyltransferase superfamily. Cation-independent O-methyltransferase family.

The protein operates within mycotoxin biosynthesis. In terms of biological role, methyltransferase; part of the gene cluster that mediates the biosynthesis of HIV-1 integrase inhibitor equisetin and of fusarisetin A, both trans-fused decalin-containing tetramic acids showing also antimicrobial activity. The PKS module of fsa1 together with the enoylreductase fsa3 catalyze the formation of the polyketide unit which is then conjugated to L-serine by the condensation domain of the fsa1 NRPS module. Activity of the Dieckmann cyclase domain (RED) results in release of the Dieckmann product intermediate. Diels-Alderase fsa2 is involved in endo-selective Diels-Alder cycloaddition to form the decalin ring, leading to the production of N-desmethylequisetin also called trichosetin. Subsequent N-methylation is carried out by fsa4 to give equisetin. The enzymatic gene responsible for the conversion of equisetin to fusarisetin A has not been identified yet and is probably located outside of the fsa cluster. This is Methyltransferase fsa4 from Fusarium sp. (strain FN080326).